The chain runs to 186 residues: Adenine phosphoribosyltransferase (186 aa).

Belongs to the purine/pyrimidine phosphoribosyltransferase family. In terms of assembly, homodimer.

It is found in the cytoplasm. It catalyses the reaction AMP + diphosphate = 5-phospho-alpha-D-ribose 1-diphosphate + adenine. Its pathway is purine metabolism; AMP biosynthesis via salvage pathway; AMP from adenine: step 1/1. Its function is as follows. Catalyzes a salvage reaction resulting in the formation of AMP, that is energically less costly than de novo synthesis. This is Adenine phosphoribosyltransferase from Xanthomonas axonopodis pv. citri (strain 306).